A 66-amino-acid polypeptide reads, in one-letter code: Large ribosomal subunit protein bL35 (66 aa).

Over residues 1–28 (MPKMKTHRGSAKRFKRTGSGKLKRRHGF) the composition is skewed to basic residues. The tract at residues 1–50 (MPKMKTHRGSAKRFKRTGSGKLKRRHGFTSHMFANKSQKQKRKLRKSAMV) is disordered.

This sequence belongs to the bacterial ribosomal protein bL35 family.

This chain is Large ribosomal subunit protein bL35, found in Listeria monocytogenes serotype 4a (strain HCC23).